Here is a 98-residue protein sequence, read N- to C-terminus: U-scoloptoxin(16)-Er9a (98 aa).

Positions 1–24 (MVSYLCMSVSSGWLSIGKIAIKDG) are cleaved as a signal peptide.

Belongs to the scoloptoxin-16 family. Post-translationally, contains 4 disulfide bonds. In terms of tissue distribution, expressed by the venom gland.

The protein localises to the secreted. The polypeptide is U-scoloptoxin(16)-Er9a (Ethmostigmus rubripes (Giant centipede)).